The chain runs to 26 residues: Toxin b subunit alpha (26 aa).

Toxin b is a heterodimer composed of toxin alpha and toxin beta. Expressed by the venom gland.

It is found in the secreted. Functionally, binds to sodium channels (Nav) and affects the channel activation process. This chain is Toxin b subunit alpha, found in Androctonus crassicauda (Arabian fat-tailed scorpion).